A 607-amino-acid polypeptide reads, in one-letter code: Chaperone protein DnaK (607 aa).

Thr173 bears the Phosphothreonine; by autocatalysis mark. 2 stretches are compositionally biased toward basic and acidic residues: residues 490–509 and 524–542; these read EQNA…RNEA and GDNV…KEAL. Disordered stretches follow at residues 490-510, 524-555, and 574-607; these read EQNA…NEAD, GDNV…EDIK, and QQAQ…KDNK. Residues 574–587 show a composition bias toward polar residues; sequence QQAQQGDAAGSNQS. The span at 595 to 607 shows a compositional bias: basic and acidic residues; it reads TEVKDDDDKKDNK.

The protein belongs to the heat shock protein 70 family.

Its function is as follows. Acts as a chaperone. In Staphylococcus carnosus (strain TM300), this protein is Chaperone protein DnaK.